A 467-amino-acid chain; its full sequence is Asparagine--tRNA ligase (467 aa).

Belongs to the class-II aminoacyl-tRNA synthetase family. As to quaternary structure, homodimer.

It is found in the cytoplasm. The catalysed reaction is tRNA(Asn) + L-asparagine + ATP = L-asparaginyl-tRNA(Asn) + AMP + diphosphate + H(+). This is Asparagine--tRNA ligase from Haemophilus influenzae (strain ATCC 51907 / DSM 11121 / KW20 / Rd).